A 213-amino-acid polypeptide reads, in one-letter code: Eukaryotic translation initiation factor 4E (213 aa).

Phosphoserine; by CK2 occurs at positions 2 and 15. The residue at position 22 (T22) is a Phosphothreonine. Residues S28 and S30 each carry the phosphoserine modification. K114 is covalently cross-linked (Glycyl lysine isopeptide (Lys-Gly) (interchain with G-Cter in ubiquitin)).

Belongs to the eukaryotic initiation factor 4E family. As to quaternary structure, component of the eIF4F complex, which composition varies with external and internal environmental conditions. It is composed of at least eIF4A (TIF1/TIF2), eIF4E (TIF45) and eIF4G (TIF4631 or TIF4632). Interacts with PAT1 in a RNA-dependent manner. eIF4E is also known to interact with other partners.

It localises to the cytoplasm. The protein resides in the nucleus. In terms of biological role, recognizes and binds the 7-methylguanosine (m7G)-containing mRNA cap during an early step in the initiation of protein synthesis and facilitates ribosome binding by inducing the unwinding of the mRNAs secondary structures. The protein is Eukaryotic translation initiation factor 4E (CDC33) of Saccharomyces cerevisiae (strain ATCC 204508 / S288c) (Baker's yeast).